Here is an 84-residue protein sequence, read N- to C-terminus: ATP synthase subunit c (84 aa).

A run of 2 helical transmembrane segments spans residues 9-29 (IIGA…GFAI) and 54-74 (IVAG…LLFI).

The protein belongs to the ATPase C chain family. As to quaternary structure, F-type ATPases have 2 components, F(1) - the catalytic core - and F(0) - the membrane proton channel. F(1) has five subunits: alpha(3), beta(3), gamma(1), delta(1), epsilon(1). F(0) has three main subunits: a(1), b(2) and c(10-14). The alpha and beta chains form an alternating ring which encloses part of the gamma chain. F(1) is attached to F(0) by a central stalk formed by the gamma and epsilon chains, while a peripheral stalk is formed by the delta and b chains.

The protein localises to the cell inner membrane. Functionally, f(1)F(0) ATP synthase produces ATP from ADP in the presence of a proton or sodium gradient. F-type ATPases consist of two structural domains, F(1) containing the extramembraneous catalytic core and F(0) containing the membrane proton channel, linked together by a central stalk and a peripheral stalk. During catalysis, ATP synthesis in the catalytic domain of F(1) is coupled via a rotary mechanism of the central stalk subunits to proton translocation. In terms of biological role, key component of the F(0) channel; it plays a direct role in translocation across the membrane. A homomeric c-ring of between 10-14 subunits forms the central stalk rotor element with the F(1) delta and epsilon subunits. This Glaesserella parasuis serovar 5 (strain SH0165) (Haemophilus parasuis) protein is ATP synthase subunit c.